Here is a 101-residue protein sequence, read N- to C-terminus: Large ribosomal subunit protein bL27 (101 aa).

The propeptide occupies 1–9 (MLLMNLQLF).

This sequence belongs to the bacterial ribosomal protein bL27 family. The N-terminus is cleaved by ribosomal processing cysteine protease Prp.

This Clostridium tetani (strain Massachusetts / E88) protein is Large ribosomal subunit protein bL27.